A 2116-amino-acid chain; its full sequence is Unconventional myosin-VIIb (2116 aa).

In terms of domain architecture, Myosin motor spans 65–760; the sequence is QGVDDMIRLG…QDTLLEVQRS (696 aa). An ATP-binding site is contributed by 158-165; sequence GESGAGKT. Residues 637–659 are actin-binding; the sequence is LDQLMKILTNCQPYFIRCIKPNE. IQ domains follow at residues 745-765, 763-792, 786-815, 814-834, 832-861, and 855-884; these read IFLR…VLDR, LDRA…AAVT, QRRA…GFER, ERLQ…AMRQ, MRQR…AVVV, and KRRA…NAPL. At S904 the chain carries Phosphoserine. The tract at residues 916 to 1542 is mediates interaction with ANKS4B; it reads EKVFGFLPAM…KKQGLLASEN (627 aa). Positions 989 to 1192 constitute a MyTH4 1 domain; it reads HIRRPLRYPL…PTWLELQAVK (204 aa). The FERM 1 domain occupies 1197-1506; sequence IPIQVILATG…EGLKERSIFA (310 aa). Phosphoserine is present on S1371. Residues 1501–1567 enclose the SH3 domain; sequence ERSIFAMALQ…PMACLYTIPT (67 aa). A mediates interaction with CDHR2, CDHR5 and USH1C region spans residues 1501–2116; that stretch reads ERSIFAMALQ…GSKAPALAST (616 aa). MyTH4 domains follow at residues 1644–1793 and 1790–1896; these read YSCE…EAAE and EAAE…KLWL. S1645 carries the post-translational modification Phosphoserine. In terms of domain architecture, FERM 2 spans 1799-2102; that stretch reads ICHKIYFPND…SYVQQLLSAM (304 aa).

The protein belongs to the TRAFAC class myosin-kinesin ATPase superfamily. Myosin family. Part of the IMAC/intermicrovillar adhesion complex/intermicrovillar tip-link complex composed of ANKS4B, MYO7B, USH1C, CDHR2 and CDHR5. Interacts with CDHR2. Interacts with CDHR5. Interacts with USH1C. Interacts with ANKS4B; requires initial interaction with USH1C. Interacts with CALML4; the interaction mediates the association of CALML4 with the IMAC/intermicrovillar adhesion complex.

The protein resides in the cytoplasm. The protein localises to the cytoskeleton. It is found in the cell projection. Its subcellular location is the microvillus. In terms of biological role, myosins are actin-based motor molecules with ATPase activity. Their highly divergent tails are presumed to bind to membranous compartments, which would be moved relative to actin filaments. As part of the intermicrovillar adhesion complex/IMAC plays a role in epithelial brush border differentiation, controlling microvilli organization and length. May link the complex to the actin core bundle of microvilli. This Homo sapiens (Human) protein is Unconventional myosin-VIIb.